We begin with the raw amino-acid sequence, 1008 residues long: ATP-dependent DNA/RNA helicase DHX36 (1008 aa).

A required for recruitment to cytoplasmic stress granules region spans residues 1-51 (MSYDYHQNWGRDGGPRSSGGGYGGGPAGGHGGNRGSGGGGGGGGGGRGGRG). The disordered stretch occupies residues 1–58 (MSYDYHQNWGRDGGPRSSGGGYGGGPAGGHGGNRGSGGGGGGGGGGRGGRGRHPGHLK). The segment at 1–104 (MSYDYHQNWG…IVQLLNSVQA (104 aa)) is required for the pre-miR-134 transport. The necessary for nuclear and nucleolar caps localizations stretch occupies residues 1–200 (MSYDYHQNWG…KKNDLRYIEM (200 aa)). The span at 16-48 (RSSGGGYGGGPAGGHGGNRGSGGGGGGGGGGRG) shows a compositional bias: gly residues. Residues 53-75 (HPGHLKGREIGMWYAKKQGQKNK) are DSM (DHX36-specific motif). Residues 53 to 105 (HPGHLKGREIGMWYAKKQGQKNKEAERQERAVVHMDERREEQIVQLLNSVQAK) are required for G4-DNA- and G4-RNA-binding. A coiled-coil region spans residues 72 to 157 (QKNKEAERQE…INQEKKMFRI (86 aa)). RecA-like domain stretches follow at residues 106 to 386 (NDKE…MIHI) and 387 to 628 (PGFT…DYQL). Ser-161 carries the post-translational modification Phosphoserine. In terms of domain architecture, Helicase ATP-binding spans 217 to 387 (VNLIDNHQVT…FGNCPMIHIP (171 aa)). ATP is bound at residue 233–238 (GCGKTT). A necessary for interaction with single-stranded DNA at the 3'-end of the G4-DNA structure region spans residues 265–317 (RRISAISVAERVAAERAESCGSGNSTGYQIRLQSRLPRKQGSILYCTTGIILQ). Residues 334-337 (DEIH) carry the DEAH box motif. Glu-335 and His-337 together coordinate Mg(2+). Positions 477 to 647 (ALIRYIVLEE…ELCLQIKILR (171 aa)) constitute a Helicase C-terminal domain. Positions 498–557 (WDNISTLHDLLMSQVMFKSDKFLIIPLHSLMPTVNQTQVFKRTPPGVRKIVIATNIAETS) are necessary for interaction with single-stranded DNA at the 3'-end of the G4-DNA structure. Positions 517–528 (DKFLIIPLHSLM) match the Nuclear localization signal motif. ATP-binding positions include Ser-557 and 602–605 (RAGR). Residues 629-698 (PEILRTPLEE…LGVHLARLPV (70 aa)) are WH domain. Necessary for interaction with single-stranded DNA at the 3'-end of the G4-DNA structure regions lie at residues 638 to 697 (ELCL…ARLP), 849 to 860 (NLGKKRKMVKVY), and 870 to 900 (HPKS…IYLY). Positions 841 to 905 (PKVAKIRLNL…SIYLYDCTEV (65 aa)) are OB-fold-like subdomains. Lys-947 is subject to N6-acetyllysine. Ser-963 bears the Phosphoserine mark.

The protein belongs to the DEAD box helicase family. DEAH subfamily. In terms of assembly, found in a multi-helicase-TICAM1 complex at least composed of DHX36, DDX1, DDX21 and TICAM1; this complex exists in resting cells with or without dsRNA poly(I:C) ligand stimulation. Interacts (via C-terminus) with TICAM1 (via TIR domain). Interacts (via C-terminus) with DDX21; this interaction serves as bridges to TICAM1. Interacts with TERT; this interaction is dependent on the ability of DHX36 to bind to the G-quadruplex RNA (G4-RNA) structure present in the telomerase RNA template component (TERC). Interacts with DKC1; this interaction is dependent on the ability of DHX36 to bind to the G4-RNA structure present in TERC. Interacts with PARN; this interaction stimulates PARN to enhance uPA mRNA decay. Interacts with EXOSC3; this interaction occurs in a RNase-insensitive manner. Interacts with EXOSC10; this interaction occurs in a RNase-insensitive manner. Interacts with ILF3; this interaction occurs in a RNA-dependent manner. Interacts with ELAVL1; this interaction occurs in an RNA-dependent manner. Interacts with DDX5; this interaction occurs in a RNA-dependent manner. Interacts with DDX17; this interaction occurs in a RNA-dependent manner. Interacts with HDAC1; this interaction occurs in a RNA-dependent manner. Interacts with HDAC3; this interaction occurs in a RNA-dependent manner. Interacts with HDAC4. Interacts with AGO1. Interacts with AGO2. Interacts with ERCC6. Requires Mg(2+) as cofactor. As to expression, highly expressed in testis.

It localises to the nucleus. Its subcellular location is the cytoplasm. The protein resides in the cytosol. The protein localises to the stress granule. It is found in the nucleus speckle. It localises to the chromosome. Its subcellular location is the telomere. The protein resides in the mitochondrion. The protein localises to the perikaryon. It is found in the cell projection. It localises to the dendrite. Its subcellular location is the axon. The catalysed reaction is ATP + H2O = ADP + phosphate + H(+). With respect to regulation, ATPase activity is enhanced in the presence of homomeric poly(U) RNAs, but not by double-stranded DNA (dsDNA), double-stranded RNA (dsRNA) and tRNA. In terms of biological role, multifunctional ATP-dependent helicase that unwinds G-quadruplex (G4) structures. Plays a role in many biological processes such as genomic integrity, gene expression regulations and as a sensor to initiate antiviral responses. G4 structures correspond to helical structures containing guanine tetrads. Binds with high affinity to and unwinds G4 structures that are formed in nucleic acids (G4-DNA and G4-RNA). Plays a role in genomic integrity. Converts the G4-RNA structure present in telomerase RNA template component (TREC) into a double-stranded RNA to promote P1 helix formation that acts as a template boundary ensuring accurate reverse transcription. Plays a role in transcriptional regulation. Resolves G4-DNA structures in promoters of genes, such as YY1, KIT/c-kit and ALPL and positively regulates their expression. Plays a role in post-transcriptional regulation. Unwinds a G4-RNA structure located in the 3'-UTR polyadenylation site of the pre-mRNA TP53 and stimulates TP53 pre-mRNA 3'-end processing in response to ultraviolet (UV)-induced DNA damage. Binds to the precursor-microRNA-134 (pre-miR-134) terminal loop and regulates its transport into the synapto-dendritic compartment. Involved in the pre-miR-134-dependent inhibition of target gene expression and the control of dendritic spine size. Plays a role in the regulation of cytoplasmic mRNA translation and mRNA stability. Binds to both G4-RNA structures and alternative non-quadruplex-forming sequence within the 3'-UTR of the PITX1 mRNA regulating negatively PITX1 protein expression. Binds to both G4-RNA structure in the 5'-UTR and AU-rich elements (AREs) localized in the 3'-UTR of NKX2-5 mRNA to either stimulate protein translation or induce mRNA decay in an ELAVL1-dependent manner, respectively. Also binds to ARE sequences present in several mRNAs mediating exosome-mediated 3'-5' mRNA degradation. Involved in cytoplasmic urokinase-type plasminogen activator (uPA) mRNA decay. Component of a multi-helicase-TICAM1 complex that acts as a cytoplasmic sensor of viral double-stranded RNA (dsRNA) and plays a role in the activation of a cascade of antiviral responses including the induction of pro-inflammatory cytokines via the adapter molecule TICAM1. Required for early embryonic development and hematopoiesis. Involved in the regulation of cardioblast differentiation and proliferation during heart development. Involved in spermatogonia differentiation. May play a role in ossification. This chain is ATP-dependent DNA/RNA helicase DHX36, found in Homo sapiens (Human).